Consider the following 206-residue polypeptide: MDAVTPKKDIPRPDSVRRPSQQEAEEAVRTLIAWAGDDPAREGLIDTPKRVVNAYKEWFEGYGEDPVKYLSRTFEDVQGYDDIVMLRNIEVESHCEHHIAPFIGKAFIAYKPSTAVVGISKLARVVEIFAKRLQTQETMTAQICDAITESLAPMGTAVFIEAEHQCMSTRGVHHKHVTTITTQFTGVFKSDADLRNRFLNMCGQTV.

Positions 1-17 (MDAVTPKKDIPRPDSVR) are enriched in basic and acidic residues. Residues 1–23 (MDAVTPKKDIPRPDSVRRPSQQE) form a disordered region. Zn(2+) contacts are provided by Cys-95, His-98, and Cys-166.

This sequence belongs to the GTP cyclohydrolase I family. In terms of assembly, toroid-shaped homodecamer, composed of two pentamers of five dimers.

It carries out the reaction GTP + H2O = 7,8-dihydroneopterin 3'-triphosphate + formate + H(+). It participates in cofactor biosynthesis; 7,8-dihydroneopterin triphosphate biosynthesis; 7,8-dihydroneopterin triphosphate from GTP: step 1/1. The sequence is that of GTP cyclohydrolase 1 from Hyphomonas neptunium (strain ATCC 15444).